The sequence spans 208 residues: uncharacterized protein (208 aa).

This is an uncharacterized protein from Legionella pneumophila subsp. pneumophila (strain Philadelphia 1 / ATCC 33152 / DSM 7513).